A 94-amino-acid polypeptide reads, in one-letter code: DNA-directed RNA polymerase subunit omega (94 aa).

This sequence belongs to the RNA polymerase subunit omega family. The RNAP catalytic core consists of 2 alpha, 1 beta, 1 beta' and 1 omega subunit. When a sigma factor is associated with the core the holoenzyme is formed, which can initiate transcription.

It carries out the reaction RNA(n) + a ribonucleoside 5'-triphosphate = RNA(n+1) + diphosphate. Functionally, promotes RNA polymerase assembly. Latches the N- and C-terminal regions of the beta' subunit thereby facilitating its interaction with the beta and alpha subunits. The sequence is that of DNA-directed RNA polymerase subunit omega from Limosilactobacillus fermentum (strain NBRC 3956 / LMG 18251) (Lactobacillus fermentum).